The chain runs to 315 residues: uncharacterized protein (315 aa).

Positions 1-23 (MSNTDALNTANTQITENVDTSSM) are enriched in polar residues. A disordered region spans residues 1-31 (MSNTDALNTANTQITENVDTSSMKVEKTHDS).

This is an uncharacterized protein from Acanthamoeba polyphaga mimivirus (APMV).